We begin with the raw amino-acid sequence, 953 residues long: MSDYKHTLNLPETEFPMRGDLAKREPNMLKRWYDQDLYGAIRRAKAGKPSFILHDGPPYANGSIHIGHSVNKILKDIIIKSKGLSGFDSPYVPGWDCHGLPIELKVEGMVGKPGEKVSAAEFRAECRKYAKTQIEAQKTDFIRLGVLGDWEHPYLTMDFGTEANIIRSMAKIVENGHLHKGSKPVHWCTDCGSALAEAEVEYYDKNSPSIDVRFKAVDEAGVAAKFDCAEGHTGKGPISAVIWTTTPWTLPANRGIAMHADLDYALVQVEGEHPERLILAAELVKDVMDRAGIEQFHNLGYAKGAALELLRFNHPFYSFDVPVVLGDHVTLDAGTGAVHTAPGHGQEDFVVGQKYGLEVANPVGSNGVYLPDTELFAGQHVFKANASVVEVLTERGALLHHKVFNHSYPHCWRHKTPIIFRATPQWFISMEQKGLRQRALEEIERIEQDGIKQHGQSGWVPAWGKNRIQAMVENRPDWCISRQRTWGVPISLFVHKETQELHPESVRLMHEVAKRVEQSGIQAWWDLDKAELLGSDADLYDKVPDTLDVWFDSGSTHSSVVDARPEFNGNPADMYLEGSDQHRGWFMSSLMIGVAMKDKAPYNQVLTHGFTVDGQGRKMSKSIGNVVSPQDVMNKLGADILRLWVASTDYTGEMTVSDEILKRSADAYRRIRNTARFLLANLNGFNPATDMVAPADMVVVDRWAVGRAKAVQAEIMAAFDEYNFHGVTQKLMQFCSIEMGSFYLDVIKDRQYTAKADSLARRSCQTALYHIAEAMVRWMAPIMSFTADEIWALLPGERGEFVFTEEWYDGLFGLEAGETLNDDFWAEILTVRGEVNKALEVARGEKRIGGSLQAELTLFAKPALAARLNALADELRFVLLTSKAKVVSVDAAPADAVATERDDLWLSVAQSAAAKCDRCWHHVEDVGTIAGHEEICGRCVTNVEGDGETRQFA.

Residues Pro58–His68 carry the 'HIGH' region motif. L-isoleucyl-5'-AMP is bound at residue Glu577. The 'KMSKS' region signature appears at Lys618–Ser622. Residue Lys621 coordinates ATP. Zn(2+)-binding residues include Cys916, Cys919, Cys936, and Cys939.

Belongs to the class-I aminoacyl-tRNA synthetase family. IleS type 1 subfamily. As to quaternary structure, monomer. Requires Zn(2+) as cofactor.

The protein localises to the cytoplasm. It catalyses the reaction tRNA(Ile) + L-isoleucine + ATP = L-isoleucyl-tRNA(Ile) + AMP + diphosphate. In terms of biological role, catalyzes the attachment of isoleucine to tRNA(Ile). As IleRS can inadvertently accommodate and process structurally similar amino acids such as valine, to avoid such errors it has two additional distinct tRNA(Ile)-dependent editing activities. One activity is designated as 'pretransfer' editing and involves the hydrolysis of activated Val-AMP. The other activity is designated 'posttransfer' editing and involves deacylation of mischarged Val-tRNA(Ile). In Aeromonas hydrophila subsp. hydrophila (strain ATCC 7966 / DSM 30187 / BCRC 13018 / CCUG 14551 / JCM 1027 / KCTC 2358 / NCIMB 9240 / NCTC 8049), this protein is Isoleucine--tRNA ligase.